Consider the following 242-residue polypeptide: Triosephosphate isomerase (242 aa).

Residue 9 to 11 (NWK) coordinates substrate. Catalysis depends on His-96, which acts as the Electrophile. Glu-165 (proton acceptor) is an active-site residue. Substrate contacts are provided by residues Gly-171, Ser-204, and 225-226 (GG).

The protein belongs to the triosephosphate isomerase family. As to quaternary structure, homodimer.

It localises to the cytoplasm. The enzyme catalyses D-glyceraldehyde 3-phosphate = dihydroxyacetone phosphate. Its pathway is carbohydrate biosynthesis; gluconeogenesis. It functions in the pathway carbohydrate degradation; glycolysis; D-glyceraldehyde 3-phosphate from glycerone phosphate: step 1/1. Involved in the gluconeogenesis. Catalyzes stereospecifically the conversion of dihydroxyacetone phosphate (DHAP) to D-glyceraldehyde-3-phosphate (G3P). This is Triosephosphate isomerase from Synechocystis sp. (strain ATCC 27184 / PCC 6803 / Kazusa).